The primary structure comprises 429 residues: MTRRAIGVSERPPLLQTIPLSLQHLFAMFGATVLVPVLFHINPATVLLFNGIGTLLYLFICKGKIPAYLGSSFAFISPVLLLLPLGYEVALGGFIMCGVLFCLVSFIVKKAGTGWLDVLFPPAAMGAIVAVIGLELAGVAAGMAGLLPAEGQTPDSKTIIISITTLAVTVLGSVLFRGFLAIIPILIGVLVGYALSFAMGIVDTTPIINAHWFALPTLYTPRFEWFAILTILPAALVVIAEHVGHLVVTANIVKKDLLRDPGLHRSMFANGLSTVISGFFGSTPNTTYGENIGVMAITRVYSTWVIGGAAIFAILLSCVGKLAAAIQMIPLPVMGGVSLLLYGVIGASGIRVLIESKVDYNKAQNLILTSVILIIGVSGAKVNIGAAELKGMALATIVGIGLSLIFKLISVLRPEEVVLDAEDADITDK.

Residues 1 to 13 (MTRRAIGVSERPP) are Cytoplasmic-facing. A helical transmembrane segment spans residues 14 to 37 (LLQTIPLSLQHLFAMFGATVLVPV). Over 38-41 (LFHI) the chain is Periplasmic. The helical transmembrane segment at 42 to 61 (NPATVLLFNGIGTLLYLFIC) threads the bilayer. Residues 62–64 (KGK) are Cytoplasmic-facing. The chain crosses the membrane as a discontinuously helical span at residues 65 to 81 (IPAYLGSSFAFISPVLL). Residue F73 coordinates uracil. Topologically, residues 82-89 (LLPLGYEV) are periplasmic. Residues 90-110 (ALGGFIMCGVLFCLVSFIVKK) form a helical membrane-spanning segment. Residues 111–122 (AGTGWLDVLFPP) lie on the Cytoplasmic side of the membrane. A helical membrane pass occupies residues 123–144 (AAMGAIVAVIGLELAGVAAGMA). The Periplasmic portion of the chain corresponds to 145–155 (GLLPAEGQTPD). A helical membrane pass occupies residues 156-171 (SKTIIISITTLAVTVL). At 172–178 (GSVLFRG) the chain is on the cytoplasmic side. A helical transmembrane segment spans residues 179–199 (FLAIIPILIGVLVGYALSFAM). Over 200 to 224 (GIVDTTPIINAHWFALPTLYTPRFE) the chain is Periplasmic. The chain crosses the membrane as a helical span at residues 225 to 248 (WFAILTILPAALVVIAEHVGHLVV). Residue E241 participates in uracil binding. At 249–261 (TANIVKKDLLRDP) the chain is on the cytoplasmic side. Residues 262 to 281 (GLHRSMFANGLSTVISGFFG) form a helical membrane-spanning segment. Residues 282 to 298 (STPNTTYGENIGVMAIT) form a discontinuously helical membrane-spanning segment. G289 and E290 together coordinate uracil. The Cytoplasmic portion of the chain corresponds to 299 to 301 (RVY). The helical transmembrane segment at 302–319 (STWVIGGAAIFAILLSCV) threads the bilayer. At 320 to 332 (GKLAAAIQMIPLP) the chain is on the periplasmic side. A helical transmembrane segment spans residues 333 to 354 (VMGGVSLLLYGVIGASGIRVLI). Residues 355–365 (ESKVDYNKAQN) are Cytoplasmic-facing. The segment at residues 366–401 (LILTSVILIIGVSGAKVNIGAAELKGMALATIVGIG) is an intramembrane region (discontinuously helical). Residues 402–429 (LSLIFKLISVLRPEEVVLDAEDADITDK) are Cytoplasmic-facing.

This sequence belongs to the nucleobase:cation symporter-2 (NCS2) (TC 2.A.40) family.

The protein resides in the cell inner membrane. It carries out the reaction uracil(in) + H(+)(in) = uracil(out) + H(+)(out). In terms of biological role, transport of uracil in the cell. The protein is Uracil permease (uraA) of Escherichia coli O157:H7.